The chain runs to 399 residues: S-adenosylmethionine synthase (399 aa).

Residue His-17 participates in ATP binding. Asp-19 provides a ligand contact to Mg(2+). K(+) is bound at residue Glu-45. Residues Glu-58 and Gln-101 each coordinate L-methionine. Residues 101–111 (QSPDIAQGVDE) are flexible loop. ATP contacts are provided by residues 177–179 (DAK), 244–245 (RF), Asp-253, 259–260 (RK), Ala-276, and Lys-280. Residue Asp-253 coordinates L-methionine. L-methionine is bound at residue Lys-284.

Belongs to the AdoMet synthase family. Homotetramer; dimer of dimers. Requires Mg(2+) as cofactor. The cofactor is K(+).

It localises to the cytoplasm. It catalyses the reaction L-methionine + ATP + H2O = S-adenosyl-L-methionine + phosphate + diphosphate. It participates in amino-acid biosynthesis; S-adenosyl-L-methionine biosynthesis; S-adenosyl-L-methionine from L-methionine: step 1/1. Catalyzes the formation of S-adenosylmethionine (AdoMet) from methionine and ATP. The overall synthetic reaction is composed of two sequential steps, AdoMet formation and the subsequent tripolyphosphate hydrolysis which occurs prior to release of AdoMet from the enzyme. This Listeria welshimeri serovar 6b (strain ATCC 35897 / DSM 20650 / CCUG 15529 / CIP 8149 / NCTC 11857 / SLCC 5334 / V8) protein is S-adenosylmethionine synthase.